Here is a 325-residue protein sequence, read N- to C-terminus: Taste receptor type 2 member 7 (325 aa).

The Extracellular portion of the chain corresponds to 1 to 9 (MADKVQTTL). The chain crosses the membrane as a helical span at residues 10–30 (LFLAVGEFSVGILGNAFIGLV). At 31 to 55 (NCMDWVKKRKIASIDLILTSLAISR) the chain is on the cytoplasmic side. A helical transmembrane segment spans residues 56–76 (ICLLCVILLDCFILVLYPDVY). Over 77–94 (ATGKEMRIIDFFWTLTNH) the chain is Extracellular. The chain crosses the membrane as a helical span at residues 95–115 (LSIWFATCLSIYYFFRIANFF). The Cytoplasmic portion of the chain corresponds to 116-128 (HPLFLWMKWRIDR). Residues 129–149 (VISWILLGCVVLSVFISLPAT) form a helical membrane-spanning segment. Topologically, residues 150 to 187 (ENLNADFRFCVKAKRKTNLTWSCRVNKTQHASTKLFLN) are extracellular. Residues asparagine 167 and asparagine 175 are each glycosylated (N-linked (GlcNAc...) asparagine). Residues 188 to 208 (LATLLPFCVCLMSFFLLILSL) form a helical membrane-spanning segment. Over 209–235 (RRHIRRMQLSATGCRDPSTEAHVRALK) the chain is Cytoplasmic. The helical transmembrane segment at 236–256 (AVISFLLLFIAYYLSFLVATS) threads the bilayer. Residues 257–266 (SYFMPETELA) are Extracellular-facing. The chain crosses the membrane as a helical span at residues 267-287 (VIFGESIALIYPSSHSFILIL). The Cytoplasmic portion of the chain corresponds to 288 to 319 (GNNKLRHASLKVIWKVMSILKGRKFQQHKQIG).

The protein belongs to the G-protein coupled receptor T2R family.

The protein localises to the membrane. Gustducin-coupled receptor implicated in the perception of bitter compounds in the oral cavity and the gastrointestinal tract. Signals through PLCB2 and the calcium-regulated cation channel TRPM5. The sequence is that of Taste receptor type 2 member 7 (TAS2R7) from Pan paniscus (Pygmy chimpanzee).